The sequence spans 132 residues: Precursor of CEP10 (132 aa).

The first 19 residues, 1–19 (MKLFIIIVVTSLTISKVFD), serve as a signal peptide directing secretion. The propeptide occupies 20–66 (KTLVTIEARNLRKMDRHEHFNANEDFVEAKMLKKIDNKNNLNNRCIN). 2 positions are modified to hydroxyproline: Pro-70 and Pro-73. The propeptide occupies 82-91 (PKVINNKFTK). Pro-95, Pro-98, and Pro-102 each carry hydroxyproline. Residues 107–116 (LRVVNNKFTN) constitute a propeptide that is removed on maturation. A hydroxyproline mark is found at Pro-120, Pro-123, and Pro-127. Pro-132 is a propeptide.

The protein belongs to the C-terminally encoded plant signaling peptide (CEP) family. Interacts with CEP receptors (e.g. CEPR1 and CEPR2). In terms of processing, the mature small signaling peptide is generated by proteolytic processing of the longer precursor.

It is found in the secreted. The protein localises to the extracellular space. The protein resides in the apoplast. In terms of biological role, extracellular signaling peptide that may regulate primary root growth rate and systemic nitrogen (N)-demand signaling. In Arabidopsis thaliana (Mouse-ear cress), this protein is Precursor of CEP10.